A 178-amino-acid chain; its full sequence is NADPH azoreductase (178 aa).

NADP(+) is bound at residue 106–111 (GGGKGG).

The protein belongs to the azoreductase type 2 family. Monomer.

It catalyses the reaction N,N-dimethyl-1,4-phenylenediamine + aniline + 2 NADP(+) = 4-(dimethylamino)azobenzene + 2 NADPH + 2 H(+). Functionally, catalyzes the reductive cleavage of azo bond in aromatic azo compounds to the corresponding amines. Requires NADPH as an electron donor for its activity. Compounds with paired naphthalene groups coupled with the azo group are good substrates, with the following preference order: Rocceline &gt; Sumifix Black B &gt; Solar Orange. This Bacillus sp. (strain OY1-2) protein is NADPH azoreductase (azr).